We begin with the raw amino-acid sequence, 410 residues long: L-sorbose 1-phosphate reductase (410 aa).

C40, H69, and E70 together coordinate Zn(2+). NAD(+) contacts are provided by residues R221 and 309–310; that span reads GT.

It belongs to the zinc-containing alcohol dehydrogenase family. The cofactor is Zn(2+).

Functionally, reduces L-sorbose 1-phosphate to D-glucitol 6-phosphate. The chain is L-sorbose 1-phosphate reductase (sorE) from Klebsiella pneumoniae.